A 317-amino-acid polypeptide reads, in one-letter code: tRNA(Ile)-lysidine synthase (317 aa).

Residue 30-35 participates in ATP binding; sequence SGGSDS.

Belongs to the tRNA(Ile)-lysidine synthase family.

It localises to the cytoplasm. It carries out the reaction cytidine(34) in tRNA(Ile2) + L-lysine + ATP = lysidine(34) in tRNA(Ile2) + AMP + diphosphate + H(+). In terms of biological role, ligates lysine onto the cytidine present at position 34 of the AUA codon-specific tRNA(Ile) that contains the anticodon CAU, in an ATP-dependent manner. Cytidine is converted to lysidine, thus changing the amino acid specificity of the tRNA from methionine to isoleucine. This Chlamydia felis (strain Fe/C-56) (Chlamydophila felis) protein is tRNA(Ile)-lysidine synthase.